Here is a 274-residue protein sequence, read N- to C-terminus: UPF0758 protein RHE_CH01848 (274 aa).

A disordered region spans residues M1–A37. Over residues S10–V22 the composition is skewed to acidic residues. In terms of domain architecture, MPN spans V152–I274. Zn(2+) contacts are provided by H223, H225, and D236. The short motif at H223–D236 is the JAMM motif element.

Belongs to the UPF0758 family.

This chain is UPF0758 protein RHE_CH01848, found in Rhizobium etli (strain ATCC 51251 / DSM 11541 / JCM 21823 / NBRC 15573 / CFN 42).